The sequence spans 88 residues: Apolipoprotein C-I (88 aa).

The N-terminal stretch at 1–26 is a signal peptide; that stretch reads MRLFIALPVLIVVVAMTLEGPAPAQA.

Belongs to the apolipoprotein C1 family. In terms of tissue distribution, adult and fetal liver.

It is found in the secreted. Its function is as follows. Inhibitor of lipoprotein binding to the low density lipoprotein (LDL) receptor, LDL receptor-related protein, and very low density lipoprotein (VLDL) receptor. Associates with high density lipoproteins (HDL) and the triacylglycerol-rich lipoproteins in the plasma and makes up about 10% of the protein of the VLDL and 2% of that of HDL. Appears to interfere directly with fatty acid uptake and is also the major plasma inhibitor of cholesteryl ester transfer protein (CETP). Modulates the interaction of APOE with beta-migrating VLDL and inhibits binding of beta-VLDL to the LDL receptor-related protein. Binds free fatty acids and reduces their intracellular esterification. The polypeptide is Apolipoprotein C-I (Apoc1) (Mus musculus (Mouse)).